A 458-amino-acid chain; its full sequence is uncharacterized protein (458 aa).

Residues 5-65 enclose the TRAM domain; it reads QAPVNKNDVV…KGYGFGRVLN (61 aa). The [4Fe-4S] cluster site is built by Cys78, Cys84, Cys87, and Cys165. Residues Gln289, Tyr318, Glu339, and Asp387 each coordinate S-adenosyl-L-methionine. Catalysis depends on Cys414, which acts as the Nucleophile.

Belongs to the class I-like SAM-binding methyltransferase superfamily. RNA M5U methyltransferase family.

This is an uncharacterized protein from Halalkalibacterium halodurans (strain ATCC BAA-125 / DSM 18197 / FERM 7344 / JCM 9153 / C-125) (Bacillus halodurans).